The following is a 230-amino-acid chain: Thymidylate kinase (230 aa).

20–27 contacts ATP; that stretch reads GGEGSGKS.

Belongs to the thymidylate kinase family.

The enzyme catalyses dTMP + ATP = dTDP + ADP. Its function is as follows. Phosphorylation of dTMP to form dTDP in both de novo and salvage pathways of dTTP synthesis. The sequence is that of Thymidylate kinase from Nitrobacter hamburgensis (strain DSM 10229 / NCIMB 13809 / X14).